Here is a 296-residue protein sequence, read N- to C-terminus: Acetylglutamate kinase (296 aa).

Residues 67 to 68 (GG), Arg-89, and Asn-194 contribute to the substrate site.

Belongs to the acetylglutamate kinase family. ArgB subfamily.

The protein localises to the cytoplasm. It catalyses the reaction N-acetyl-L-glutamate + ATP = N-acetyl-L-glutamyl 5-phosphate + ADP. Its pathway is amino-acid biosynthesis; L-arginine biosynthesis; N(2)-acetyl-L-ornithine from L-glutamate: step 2/4. In terms of biological role, catalyzes the ATP-dependent phosphorylation of N-acetyl-L-glutamate. In Brucella abortus (strain S19), this protein is Acetylglutamate kinase.